Reading from the N-terminus, the 238-residue chain is Probable xyloglucan-specific endo-beta-1,4-glucanase A (238 aa).

Positions 1–18 (MKLSLSVALSLAAATAQA) are cleaved as a signal peptide. N-linked (GlcNAc...) asparagine glycans are attached at residues Asn-106 and Asn-171.

This sequence belongs to the glycosyl hydrolase 12 (cellulase H) family.

The protein localises to the secreted. The enzyme catalyses xyloglucan + H2O = xyloglucan oligosaccharides.. Catalyzes endohydrolysis of 1,4-beta-D-glucosidic linkages in xyloglucan with retention of the beta-configuration of the glycosyl residues. Specific for xyloglucan and does not hydrolyze other cell wall components. This is Probable xyloglucan-specific endo-beta-1,4-glucanase A (xgeA) from Aspergillus fumigatus (strain CBS 144.89 / FGSC A1163 / CEA10) (Neosartorya fumigata).